Here is a 560-residue protein sequence, read N- to C-terminus: Dihydroxy-acid dehydratase (560 aa).

C52 contacts [2Fe-2S] cluster. D84 provides a ligand contact to Mg(2+). A [2Fe-2S] cluster-binding site is contributed by C125. D126 and K127 together coordinate Mg(2+). Position 127 is an N6-carboxylysine (K127). C197 is a [2Fe-2S] cluster binding site. Residue E448 coordinates Mg(2+). The active-site Proton acceptor is S474.

This sequence belongs to the IlvD/Edd family. In terms of assembly, homodimer. It depends on [2Fe-2S] cluster as a cofactor. Mg(2+) serves as cofactor.

The enzyme catalyses (2R)-2,3-dihydroxy-3-methylbutanoate = 3-methyl-2-oxobutanoate + H2O. It carries out the reaction (2R,3R)-2,3-dihydroxy-3-methylpentanoate = (S)-3-methyl-2-oxopentanoate + H2O. It functions in the pathway amino-acid biosynthesis; L-isoleucine biosynthesis; L-isoleucine from 2-oxobutanoate: step 3/4. It participates in amino-acid biosynthesis; L-valine biosynthesis; L-valine from pyruvate: step 3/4. Functions in the biosynthesis of branched-chain amino acids. Catalyzes the dehydration of (2R,3R)-2,3-dihydroxy-3-methylpentanoate (2,3-dihydroxy-3-methylvalerate) into 2-oxo-3-methylpentanoate (2-oxo-3-methylvalerate) and of (2R)-2,3-dihydroxy-3-methylbutanoate (2,3-dihydroxyisovalerate) into 2-oxo-3-methylbutanoate (2-oxoisovalerate), the penultimate precursor to L-isoleucine and L-valine, respectively. In Francisella tularensis subsp. novicida (strain U112), this protein is Dihydroxy-acid dehydratase.